Consider the following 353-residue polypeptide: Photosystem II protein D1 (353 aa).

An N-acetylthreonine modification is found at threonine 2. Threonine 2 bears the Phosphothreonine mark. Transmembrane regions (helical) follow at residues 29–46, 118–133, and 142–156; these read YIGW…TATS, HFLL…EWEL, and WIAV…AATA. Position 118 (histidine 118) interacts with chlorophyll a. Position 126 (tyrosine 126) interacts with pheophytin a. Residues aspartate 170 and glutamate 189 each coordinate [CaMn4O5] cluster. Residues 197–218 traverse the membrane as a helical segment; sequence FHMLGVAGVFGGSLFSAMHGSL. Histidine 198 lines the chlorophyll a pocket. Residues histidine 215 and 264-265 contribute to the a quinone site; that span reads SF. Histidine 215 serves as a coordination point for Fe cation. Histidine 272 contributes to the Fe cation binding site. The chain crosses the membrane as a helical span at residues 274–288; that stretch reads FLAAWPVVGIWFTAL. 4 residues coordinate [CaMn4O5] cluster: histidine 332, glutamate 333, aspartate 342, and alanine 344. Residues 345-353 constitute a propeptide that is removed on maturation; that stretch reads AIEAPATNG.

It belongs to the reaction center PufL/M/PsbA/D family. PSII is composed of 1 copy each of membrane proteins PsbA, PsbB, PsbC, PsbD, PsbE, PsbF, PsbH, PsbI, PsbJ, PsbK, PsbL, PsbM, PsbT, PsbX, PsbY, PsbZ, Psb30/Ycf12, at least 3 peripheral proteins of the oxygen-evolving complex and a large number of cofactors. It forms dimeric complexes. The D1/D2 heterodimer binds P680, chlorophylls that are the primary electron donor of PSII, and subsequent electron acceptors. It shares a non-heme iron and each subunit binds pheophytin, quinone, additional chlorophylls, carotenoids and lipids. D1 provides most of the ligands for the Mn4-Ca-O5 cluster of the oxygen-evolving complex (OEC). There is also a Cl(-1) ion associated with D1 and D2, which is required for oxygen evolution. The PSII complex binds additional chlorophylls, carotenoids and specific lipids. is required as a cofactor. Tyr-161 forms a radical intermediate that is referred to as redox-active TyrZ, YZ or Y-Z. Post-translationally, C-terminally processed by CTPA; processing is essential to allow assembly of the oxygen-evolving complex and thus photosynthetic growth.

The protein localises to the plastid membrane. The catalysed reaction is 2 a plastoquinone + 4 hnu + 2 H2O = 2 a plastoquinol + O2. Functionally, photosystem II (PSII) is a light-driven water:plastoquinone oxidoreductase that uses light energy to abstract electrons from H(2)O, generating O(2) and a proton gradient subsequently used for ATP formation. It consists of a core antenna complex that captures photons, and an electron transfer chain that converts photonic excitation into a charge separation. The D1/D2 (PsbA/PsbD) reaction center heterodimer binds P680, the primary electron donor of PSII as well as several subsequent electron acceptors. This chain is Photosystem II protein D1, found in Cuscuta reflexa (Southern Asian dodder).